Consider the following 199-residue polypeptide: dTTP/UTP pyrophosphatase (199 aa).

D75 acts as the Proton acceptor in catalysis.

The protein belongs to the Maf family. YhdE subfamily. It depends on a divalent metal cation as a cofactor.

The protein localises to the cytoplasm. It carries out the reaction dTTP + H2O = dTMP + diphosphate + H(+). It catalyses the reaction UTP + H2O = UMP + diphosphate + H(+). Its function is as follows. Nucleoside triphosphate pyrophosphatase that hydrolyzes dTTP and UTP. May have a dual role in cell division arrest and in preventing the incorporation of modified nucleotides into cellular nucleic acids. The protein is dTTP/UTP pyrophosphatase of Methylobacillus flagellatus (strain ATCC 51484 / DSM 6875 / VKM B-1610 / KT).